Reading from the N-terminus, the 159-residue chain is SsrA-binding protein (159 aa).

The span at 133-147 (KRQDLAKRDAQREMA) shows a compositional bias: basic and acidic residues. A disordered region spans residues 133 to 159 (KRQDLAKRDAQREMARAAGRRSKGMDD). The span at 150–159 (AGRRSKGMDD) shows a compositional bias: basic residues.

It belongs to the SmpB family.

Its subcellular location is the cytoplasm. Functionally, required for rescue of stalled ribosomes mediated by trans-translation. Binds to transfer-messenger RNA (tmRNA), required for stable association of tmRNA with ribosomes. tmRNA and SmpB together mimic tRNA shape, replacing the anticodon stem-loop with SmpB. tmRNA is encoded by the ssrA gene; the 2 termini fold to resemble tRNA(Ala) and it encodes a 'tag peptide', a short internal open reading frame. During trans-translation Ala-aminoacylated tmRNA acts like a tRNA, entering the A-site of stalled ribosomes, displacing the stalled mRNA. The ribosome then switches to translate the ORF on the tmRNA; the nascent peptide is terminated with the 'tag peptide' encoded by the tmRNA and targeted for degradation. The ribosome is freed to recommence translation, which seems to be the essential function of trans-translation. The protein is SsrA-binding protein of Salinispora arenicola (strain CNS-205).